Here is a 165-residue protein sequence, read N- to C-terminus: Pro-MCH (165 aa).

Positions 1 to 21 (MAKMSLSSYMLMLAFSLFSHG) are cleaved as a signal peptide. A compositionally biased stretch (basic and acidic residues) spans 69-82 (DESGFMKDDDDKTT). The tract at residues 69–89 (DESGFMKDDDDKTTKNTGSKQ) is disordered. Ile-143 carries the post-translational modification Isoleucine amide. Cys-153 and Cys-162 are oxidised to a cystine.

Belongs to the melanin-concentrating hormone family. Pro-MCH is processed differentially in the brain and in peripheral organs producing two neuropeptides; NEI and MCH. A third peptide, NGE, may also be produced. Preferential processing in neurons by prohormone convertase 2 (PC2) generates NEI. MCH is generated in neurons of the lateral hypothalmic area by several prohormone convertases including PC1/3, PC2 and PC5/6. MCH is present in all regions of the brain and in neurointermediate lobe of the pituarity gland, with highest concentrations in the hypothalamus. Also expressed to a much lesser extent in stomach, lamina propria of both duodenum and colon, ovary, thymus, pancreas, adrenal gland and testis (spermatogonia, early spermatocytes and Sertoli cells). Weak expression in heart and lung. The other peptides are expressed at least in Sertoli cells, nei being also expressed in brain, stomach and proximal duodenum. In brain exclusively mature mch and nei peptides are present. In peripheral tissues a large product, encompassing the NEI and MCH domains of the precursor, is found predominantly. At low levels fully processed MCH and NEI peptides are present in gut. No expression in peripheral blood.

The protein localises to the secreted. Functionally, MCH inhibits ACTH secretion at the end of the light on period which corresponds to the peak of the circadian rhythm in ACTH. Inhibits also stress induced ACTH release during the light off period of the cycle. Involved as a neurotransmitter or neuromodulator in a broad array of neuronal functions. Stimulates sexual behavior when injected into the ventromedial nucleus, this effect is antagonized by NEI. In the medial preoptic area, stimulates anxiety and sexual behavior. Antagonizes inhibitory effect of melanotropin alpha on exploration behavior. Its function is as follows. NEI can influence differentiation of neuronal processes in brain neurons. Affects the content of neurofilament protein in neuritogenesis (in vitro). May also be a neuromodulatory factor. In behavioral tests, it stimulates exploration and anxiety when injected into the ventromedial nucleus. Also stimulates grooming, locomotion and rearing. May antagonize the inhibitory effect of mch on ACTH release. Reduces dopamine and dopac release in the ventromedial nucleus. The sequence is that of Pro-MCH (Pmch) from Rattus norvegicus (Rat).